A 95-amino-acid chain; its full sequence is Protein RnfH (95 aa).

It belongs to the UPF0125 (RnfH) family.

The sequence is that of Protein RnfH from Erwinia tasmaniensis (strain DSM 17950 / CFBP 7177 / CIP 109463 / NCPPB 4357 / Et1/99).